We begin with the raw amino-acid sequence, 108 residues long: Cell division topological specificity factor (108 aa).

It belongs to the MinE family.

Its function is as follows. Prevents the cell division inhibition by proteins MinC and MinD at internal division sites while permitting inhibition at polar sites. This ensures cell division at the proper site by restricting the formation of a division septum at the midpoint of the long axis of the cell. In Prochlorococcus marinus (strain AS9601), this protein is Cell division topological specificity factor.